The chain runs to 120 residues: UPF0342 protein LAF_1331 (120 aa).

Belongs to the UPF0342 family.

This Limosilactobacillus fermentum (strain NBRC 3956 / LMG 18251) (Lactobacillus fermentum) protein is UPF0342 protein LAF_1331.